The primary structure comprises 132 residues: Snaclec bothroinsularin subunit alpha (132 aa).

Disulfide bonds link C2-C13, C30-C127, and C102-C119. The C-type lectin domain occupies Y9–K128.

Belongs to the snaclec family. In terms of assembly, heterodimer of subunits alpha and beta; disulfide-linked. As to expression, expressed by the venom gland.

The protein localises to the secreted. In terms of biological role, thrombin and prothrombin (F2) inhibitor. The IC(50) of thrombin-induced platelet aggregation and fibrinocoagulation is 62 and 35 nM, respectively. Its inhibitory activity is at least 10-fold lower than that observed for other thrombin inhibitors. This is Snaclec bothroinsularin subunit alpha from Bothrops insularis (Golden lancehead).